The sequence spans 402 residues: MRVIDGGVTAPKGFKANGYKEGKFGVAIIISEKDAVGAGTFTTNKVVAHPVVLSRELIKNRDKFRAIVANSGNANCFTKDGMEDAKEMQRLVAELFNINEDEVLVASTGVIGRKMDMNIIKDRINKVYNLIKEGNSSINAAKAIMTTDTKPKEIAVEFEVNGKTVRVGGIAKGAGMIAPNMLHATMLCFITTDIEIDKESLTNILQKVVDKTFNNISVDGDTSTNDTVFVLANGLSGVNYEECGEEFENALLYVCRELAKMIVKDGEGATKFMEVVVKGAKTEEDAVKASKAIVNSLLVKTAVFGGDPNWGRIVAAVGYSGADFNPEVVDVILSNYKDEVYLVKDGIPLADEGTEELKKAEEIMKSDEIKIVVDLKMGEFENVCYGCDLSYEYVRINAEYTT.

Positions 146, 172, 185, 267, 397, and 402 each coordinate substrate. Catalysis depends on Thr185, which acts as the Nucleophile.

Belongs to the ArgJ family. As to quaternary structure, heterotetramer of two alpha and two beta chains.

It is found in the cytoplasm. The catalysed reaction is N(2)-acetyl-L-ornithine + L-glutamate = N-acetyl-L-glutamate + L-ornithine. It functions in the pathway amino-acid biosynthesis; L-arginine biosynthesis; L-ornithine and N-acetyl-L-glutamate from L-glutamate and N(2)-acetyl-L-ornithine (cyclic): step 1/1. Competitively inhibited by L-ornithine. Functionally, catalyzes the transfer of the acetyl group from N(2)-acetylornithine to glutamate, forming N-acetylglutamate and L-ornithine. This is Glutamate N-acetyltransferase from Methanocaldococcus jannaschii (strain ATCC 43067 / DSM 2661 / JAL-1 / JCM 10045 / NBRC 100440) (Methanococcus jannaschii).